We begin with the raw amino-acid sequence, 436 residues long: Chorion-specific transcription factor GCMa (436 aa).

Positions 14–169 form a DNA-binding region, GCM; it reads LSWDINDVKL…KLEAEARRAM (156 aa). 8 residues coordinate Zn(2+): C76, C82, C86, C113, C116, C125, H152, and H154. Positions 171-202 are disordered; it reads KVNTAPSSVSLSLKGSTETRSLPGETQSQGSL. A compositionally biased stretch (polar residues) spans 174 to 202; it reads TAPSSVSLSLKGSTETRSLPGETQSQGSL.

Polyubiquitinated in the presence of UBE2D2 and FBXW2 (in vitro). In terms of tissue distribution, highly expressed in the placenta. Expressed in trophoblast cells of the villi.

It is found in the nucleus. Transcription factor involved in the control of expression of placental growth factor (PGF) and other placenta-specific genes. Binds to the trophoblast-specific element 2 (TSE2) of the aromatase gene enhancer. Binds to the SYDE1 promoter. Has a central role in mediating the differentiation of trophoblast cells along both the villous and extravillous pathways in placental development. This chain is Chorion-specific transcription factor GCMa (GCM1), found in Homo sapiens (Human).